Reading from the N-terminus, the 353-residue chain is Mas-related G-protein coupled receptor member B5 (353 aa).

The Extracellular segment spans residues 1–67; sequence MPDSPTESYG…SCIITFNTLN (67 aa). N-linked (GlcNAc...) asparagine glycosylation is found at Asn26 and Asn44. A helical membrane pass occupies residues 68 to 90; that stretch reads FLTATISVVGTAGNATVLRLLGF. At 91 to 96 the chain is on the cytoplasmic side; that stretch reads HMHRYA. The helical transmembrane segment at 97-117 threads the bilayer; that stretch reads FSVYVFNLAGADFLYLCTQTV. The Extracellular segment spans residues 118 to 131; it reads YSLECVLQFDNSYF. A helical membrane pass occupies residues 132 to 152; sequence YFLLTILMFAYLAALCMIPAI. Residues 153 to 180 are Cytoplasmic-facing; the sequence is STERCLSVTWPIWYHCQRPRHTSATVCA. A helical transmembrane segment spans residues 181 to 201; the sequence is LFWAFSLLLRLLLGQGCGFLF. At 202–213 the chain is on the extracellular side; sequence GKYDYYFCRYCS. The helical transmembrane segment at 214–234 threads the bilayer; the sequence is FITTAFLIVLFVVPFVSSLAM. The Cytoplasmic segment spans residues 235 to 253; it reads LTKIICGSHRIPVTRFYVT. Residues 254-274 form a helical membrane-spanning segment; it reads IAVTVLVFTFFGLPVGIISLL. Over 275 to 289 the chain is Extracellular; it reads LPRIVVFRGVFYIYK. The chain crosses the membrane as a helical span at residues 290 to 310; sequence IVTFLYSVNCCANPIIYFLIG. Residues 311–353 lie on the Cytoplasmic side of the membrane; sequence SIRHHRLQRQSLKLLLQRAMQDTPEEEGGVKGPSQKSNELEIV. The segment at 333–353 is disordered; that stretch reads TPEEEGGVKGPSQKSNELEIV.

This sequence belongs to the G-protein coupled receptor 1 family. Mas subfamily. In terms of tissue distribution, expressed strongly in newborn dorsal root ganglia, adult dorsal root ganglia and trigeminal ganlia.

Its subcellular location is the membrane. Its function is as follows. Orphan receptor. Probably involved in the function of nociceptive neurons. May regulate nociceptor function and/or development, including the sensation or modulation of pain. This chain is Mas-related G-protein coupled receptor member B5 (Mrgprb5), found in Rattus norvegicus (Rat).